Consider the following 609-residue polypeptide: MTIDNPSAFLKTLPTGSGVYQIQDAQGKVIYVGKARNLQKRVSSYFRRQLDSKTQAMMAQVQSIQTTITRNENEALLLEASFIKQFRPRYNVLLRDDKSYPYLYLATHQKFPRLDFYRGAKKAPGRYFGPYPNAGSVRENLALIQKLFKLRQCSESFFKNRTRPCLQYQIKRCTAPCVGYVNEQEYRRQVEDAILFFEGKNDQVIIKLTERMEVASENLVFEEAAHYRDQIRQLRRLQKQQIITGGKGNIDIIGIAESNGAIGFAILFIRSGRMIGHKPFFPNTPLGTTLQTALVEFIPQYYLSPLRNGDIPERIVTSEPLEDRLWIQRALSSGLNRRLAITDQKRAPYKQWQAMAALNAAQALSQHLAQKNTFALKLEAIQKSLALPNPIARIECFDISHTLGEATVASCVVFGEEGLIKKDYRRFNISGVTPGDDYGALRQALTRRYVRLKEGEGILPDVLLIDGGMGQLRQAAEVLEELQVSGVILTAIAKGPGRKAGLEKLFVWGRREEIHLPADNIAFHLIQQIRDEAHRFAITAHCNRRAKRRVESTLQEIEGIGPKRRQKLLKYFGGLQELQRASIEEIARVPGVSETLAKAIYDACHQHKG.

The 78-residue stretch at Thr-15 to Val-92 folds into the GIY-YIG domain. Residues Asp-202 to Leu-237 form the UVR domain.

The protein belongs to the UvrC family. Interacts with UvrB in an incision complex.

The protein localises to the cytoplasm. Functionally, the UvrABC repair system catalyzes the recognition and processing of DNA lesions. UvrC both incises the 5' and 3' sides of the lesion. The N-terminal half is responsible for the 3' incision and the C-terminal half is responsible for the 5' incision. This chain is UvrABC system protein C, found in Coxiella burnetii (strain Dugway 5J108-111).